Reading from the N-terminus, the 330-residue chain is Beta-ketoacyl-[acyl-carrier-protein] synthase III 2 (330 aa).

Active-site residues include cysteine 118 and histidine 246. Residues 247–251 (QANLR) are ACP-binding. Residue asparagine 276 is part of the active site.

The protein belongs to the thiolase-like superfamily. FabH family. Homodimer.

The protein localises to the cytoplasm. The catalysed reaction is malonyl-[ACP] + acetyl-CoA + H(+) = 3-oxobutanoyl-[ACP] + CO2 + CoA. Its pathway is lipid metabolism; fatty acid biosynthesis. In terms of biological role, catalyzes the condensation reaction of fatty acid synthesis by the addition to an acyl acceptor of two carbons from malonyl-ACP. Catalyzes the first condensation reaction which initiates fatty acid synthesis and may therefore play a role in governing the total rate of fatty acid production. Possesses both acetoacetyl-ACP synthase and acetyl transacylase activities. Its substrate specificity determines the biosynthesis of branched-chain and/or straight-chain of fatty acids. The sequence is that of Beta-ketoacyl-[acyl-carrier-protein] synthase III 2 from Streptomyces coelicolor (strain ATCC BAA-471 / A3(2) / M145).